Here is a 581-residue protein sequence, read N- to C-terminus: AP2-like ethylene-responsive transcription factor AIL6 (581 aa).

2 disordered regions span residues 105–132 (VRYS…HHNQ) and 205–240 (NNTN…TDSE). 2 stretches are compositionally biased toward low complexity: residues 108 to 122 (SDNS…SLTQ) and 218 to 232 (RGNN…NNNN). 2 consecutive DNA-binding regions (AP2/ERF) follow at residues 268–331 (IYRG…TNFP) and 367–425 (IYRG…TNFE).

Belongs to the AP2/ERF transcription factor family. AP2 subfamily. Expressed in roots, seedlings, hypocotyl, inflorescence, siliques, and pistils. Also detected at low levels in leaves.

It localises to the nucleus. Probably acts as a transcriptional activator. Binds to the GCC-box pathogenesis-related promoter element. May be involved in the regulation of gene expression by stress factors and by components of stress signal transduction pathways. This is AP2-like ethylene-responsive transcription factor AIL6 from Arabidopsis thaliana (Mouse-ear cress).